Here is an 83-residue protein sequence, read N- to C-terminus: MKKGLHPESYRPVVFKDMSNGDMFLSKSTVATKETIEFEGETYPLLKIEISNTSHPFYTGKSTLVDTAGRVDKFMSRYGNRKK.

This sequence belongs to the bacterial ribosomal protein bL31 family. Type B subfamily. As to quaternary structure, part of the 50S ribosomal subunit.

This chain is Large ribosomal subunit protein bL31B, found in Bacteroides fragilis (strain ATCC 25285 / DSM 2151 / CCUG 4856 / JCM 11019 / LMG 10263 / NCTC 9343 / Onslow / VPI 2553 / EN-2).